The chain runs to 151 residues: Small ribosomal subunit protein uS9 (151 aa).

Over residues 1 to 19 (MTETTPAPQTPAAPAGPAQ) the composition is skewed to low complexity. 2 disordered regions span residues 1 to 20 (MTET…PAQS) and 121 to 151 (KAGF…YSKR). Residues 127–136 (RDPRATERKK) show a composition bias toward basic and acidic residues. The span at 137–151 (YGLKKARKAPQYSKR) shows a compositional bias: basic residues.

This sequence belongs to the universal ribosomal protein uS9 family.

The polypeptide is Small ribosomal subunit protein uS9 (rpsI) (Mycobacterium bovis (strain ATCC BAA-935 / AF2122/97)).